The following is an 81-amino-acid chain: Small ribosomal subunit protein eS21 (81 aa).

This sequence belongs to the eukaryotic ribosomal protein eS21 family. In terms of assembly, component of the 40S small ribosomal subunit.

The protein localises to the cytoplasm. It is found in the cytosol. Its subcellular location is the rough endoplasmic reticulum. Functionally, component of the small ribosomal subunit. The ribosome is a large ribonucleoprotein complex responsible for the synthesis of proteins in the cell. The polypeptide is Small ribosomal subunit protein eS21 (rps21) (Danio rerio (Zebrafish)).